Consider the following 724-residue polypeptide: Probable ATP-dependent RNA helicase DDX4 (724 aa).

The span at 1 to 11 shows a compositional bias: acidic residues; that stretch reads MSGQEDWESEI. Disordered stretches follow at residues 1-25 and 37-241; these read MSGQ…SNSE and SSNN…QGPR. Positions 108–130 are enriched in basic and acidic residues; it reads SNGKQESGDFTNDDNRTIDDNRR. Residues 168–182 are compositionally biased toward polar residues; sequence EQSGFTSNDGFNNET. Residues 286 to 314 carry the Q motif motif; the sequence is LTFEEANLCDSLAKNVCKSGYVKLTPIQK. In terms of domain architecture, Helicase ATP-binding spans 317–500; sequence IPIIVAGRDL…REILKPDYLF (184 aa). 330–337 serves as a coordination point for ATP; it reads AQTGSGKT. Residues 444–447 carry the DEAD box motif; sequence DEAD. The Helicase C-terminal domain maps to 512–675; sequence DVEQMVIEVD…EVPAWLEEVA (164 aa). A compositionally biased stretch (polar residues) spans 683–692; sequence AYNPRSNKFA. Residues 683 to 724 form a disordered region; the sequence is AYNPRSNKFASTDDRKRGDSRGDYSTSGFSPSAAQAEEEDWG. A compositionally biased stretch (basic and acidic residues) spans 693-704; it reads STDDRKRGDSRG. Over residues 705–715 the composition is skewed to polar residues; it reads DYSTSGFSPSA.

The protein belongs to the DEAD box helicase family. DDX4/VASA subfamily.

It is found in the cytoplasm. The catalysed reaction is ATP + H2O = ADP + phosphate + H(+). In terms of biological role, probable ATP-dependent RNA helicase required during spermatogenesis to repress transposable elements and preventing their mobilization, which is essential for the germline integrity. Acts via the piRNA metabolic process, which mediates the repression of transposable elements during meiosis by forming complexes composed of piRNAs and Piwi proteins and governs the methylation and subsequent repression of transposons. Involved in the secondary piRNAs metabolic process, the production of piRNAs in fetal male germ cells through a ping-pong amplification cycle. The protein is Probable ATP-dependent RNA helicase DDX4 of Pelophylax lessonae (Pool frog).